Consider the following 475-residue polypeptide: Sulfate adenylyltransferase subunit 1 (475 aa).

The tr-type G domain occupies 25 to 239; the sequence is KSLLRFLTCG…EVLETVEIQR (215 aa). Residues 34–41 form a G1 region; the sequence is GSVDDGKS. A GTP-binding site is contributed by 34–41; it reads GSVDDGKS. Residues 92–96 are G2; that stretch reads GITID. A G3 region spans residues 113 to 116; it reads DTPG. GTP contacts are provided by residues 113–117 and 168–171; these read DTPGH and NKMD. Residues 168–171 form a G4 region; that stretch reads NKMD. Residues 206–208 form a G5 region; it reads SAL.

Belongs to the TRAFAC class translation factor GTPase superfamily. Classic translation factor GTPase family. CysN/NodQ subfamily. Heterodimer composed of CysD, the smaller subunit, and CysN.

It catalyses the reaction sulfate + ATP + H(+) = adenosine 5'-phosphosulfate + diphosphate. Its pathway is sulfur metabolism; hydrogen sulfide biosynthesis; sulfite from sulfate: step 1/3. Functionally, with CysD forms the ATP sulfurylase (ATPS) that catalyzes the adenylation of sulfate producing adenosine 5'-phosphosulfate (APS) and diphosphate, the first enzymatic step in sulfur assimilation pathway. APS synthesis involves the formation of a high-energy phosphoric-sulfuric acid anhydride bond driven by GTP hydrolysis by CysN coupled to ATP hydrolysis by CysD. The chain is Sulfate adenylyltransferase subunit 1 from Escherichia coli (strain ATCC 8739 / DSM 1576 / NBRC 3972 / NCIMB 8545 / WDCM 00012 / Crooks).